A 185-amino-acid polypeptide reads, in one-letter code: Large ribosomal subunit protein bL25 (185 aa).

It belongs to the bacterial ribosomal protein bL25 family. CTC subfamily. In terms of assembly, part of the 50S ribosomal subunit; part of the 5S rRNA/L5/L18/L25 subcomplex. Contacts the 5S rRNA. Binds to the 5S rRNA independently of L5 and L18.

Its function is as follows. This is one of the proteins that binds to the 5S RNA in the ribosome where it forms part of the central protuberance. This is Large ribosomal subunit protein bL25 from Chlamydia abortus (strain DSM 27085 / S26/3) (Chlamydophila abortus).